The primary structure comprises 88 residues: Small ribosomal subunit protein bS16c (88 aa).

It belongs to the bacterial ribosomal protein bS16 family.

The protein localises to the plastid. The protein resides in the chloroplast. The sequence is that of Small ribosomal subunit protein bS16c from Gossypium hirsutum (Upland cotton).